A 41-amino-acid polypeptide reads, in one-letter code: Large ribosomal subunit protein bL36 (41 aa).

This sequence belongs to the bacterial ribosomal protein bL36 family.

The sequence is that of Large ribosomal subunit protein bL36 from Nitrobacter winogradskyi (strain ATCC 25391 / DSM 10237 / CIP 104748 / NCIMB 11846 / Nb-255).